Consider the following 486-residue polypeptide: Cardiolipin synthase A (486 aa).

The next 2 membrane-spanning stretches (helical) occupy residues 3-23 (TFYT…IASV) and 38-58 (MAWL…YLSF). 2 consecutive PLD phosphodiesterase domains span residues 219-246 (MDLR…VDPR) and 399-426 (EGGL…DMRS). Active-site residues include His-224, Lys-226, Asp-231, His-404, Lys-406, and Asp-411.

This sequence belongs to the phospholipase D family. Cardiolipin synthase subfamily. ClsA sub-subfamily.

Its subcellular location is the cell inner membrane. The catalysed reaction is 2 a 1,2-diacyl-sn-glycero-3-phospho-(1'-sn-glycerol) = a cardiolipin + glycerol. Catalyzes the reversible phosphatidyl group transfer from one phosphatidylglycerol molecule to another to form cardiolipin (CL) (diphosphatidylglycerol) and glycerol. The protein is Cardiolipin synthase A of Edwardsiella ictaluri (strain 93-146).